We begin with the raw amino-acid sequence, 125 residues long: Small ribosomal subunit protein uS13 (125 aa).

The disordered stretch occupies residues R93–R125. The span at Q101–R125 shows a compositional bias: basic residues.

Belongs to the universal ribosomal protein uS13 family. Part of the 30S ribosomal subunit. Forms a loose heterodimer with protein S19. Forms two bridges to the 50S subunit in the 70S ribosome.

In terms of biological role, located at the top of the head of the 30S subunit, it contacts several helices of the 16S rRNA. In the 70S ribosome it contacts the 23S rRNA (bridge B1a) and protein L5 of the 50S subunit (bridge B1b), connecting the 2 subunits; these bridges are implicated in subunit movement. Contacts the tRNAs in the A and P-sites. This chain is Small ribosomal subunit protein uS13, found in Synechococcus elongatus (strain ATCC 33912 / PCC 7942 / FACHB-805) (Anacystis nidulans R2).